Reading from the N-terminus, the 307-residue chain is Coenzyme PQQ synthesis protein B (307 aa).

This sequence belongs to the PqqB family.

It participates in cofactor biosynthesis; pyrroloquinoline quinone biosynthesis. May be involved in the transport of PQQ or its precursor to the periplasm. This is Coenzyme PQQ synthesis protein B from Gluconacetobacter diazotrophicus (strain ATCC 49037 / DSM 5601 / CCUG 37298 / CIP 103539 / LMG 7603 / PAl5).